The primary structure comprises 481 residues: Protein FAM83E (481 aa).

Residues 1–296 form a DUF1669 region; sequence MAASQLAALE…LYAASRPLSA (296 aa). The tract at residues 351–481 is disordered; the sequence is KQETPTTTGP…ASGSGSGRRR (131 aa). A compositionally biased stretch (low complexity) spans 371–385; the sequence is RTRTTSGPPTRPSRS. Composition is skewed to polar residues over residues 391–400 and 465–474; these read RLSQLSGSSD and NATTSDWASG.

The protein belongs to the FAM83 family. Directly interacts (via DUF1669) with CSNK1A1, CSNK1A1L, CSNK1D and CSNK1E. May interact with RAF1.

The protein resides in the cytoplasm. Its subcellular location is the perinuclear region. In terms of biological role, may play a role in MAPK signaling. The polypeptide is Protein FAM83E (Mus musculus (Mouse)).